Consider the following 3933-residue polypeptide: Circularly permutated Ras protein 2 (3933 aa).

Residues 12 to 46 (VHEVKKQELESILLQQEQEKQAKEEKESIKDTDDK) are a coiled coil. Disordered regions lie at residues 23-101 (ILLQ…IEKK), 136-189 (DIRE…RKET), 1022-1054 (ITTT…TTTT), and 2817-2839 (NNNN…RPTR). Residues 28–62 (EQEKQAKEEKESIKDTDDKPIEDTEHSTNNDKPIE) show a composition bias toward basic and acidic residues. The segment covering 70-92 (TPTTTTTTKPTDEASSSSNNNNN) has biased composition (low complexity). Positions 136-145 (DIREPTDKPF) are enriched in basic and acidic residues. The span at 146-156 (ENTSNIETTRQ) shows a compositional bias: polar residues. Positions 167 to 215 (KTEAERLEQEQKQKQYDENRKETDRKLELELERLKNKKEEVEQIRAYFQ) form a coiled coil. Residues 168–189 (TEAERLEQEQKQKQYDENRKET) show a composition bias toward basic and acidic residues. Positions 2817–2826 (NNNNNNNRYN) are enriched in low complexity. Residues 2853 to 2857 (DTAGQ), 2913 to 2916 (TKAD), and 2976 to 2983 (GDGGIGKS) contribute to the GTP site. Disordered regions lie at residues 3036 to 3086 (LQSA…LSSR), 3107 to 3142 (RKSS…QDYE), and 3733 to 3754 (VIEP…PSSS). A compositionally biased stretch (low complexity) spans 3070-3086 (PSSSSTRTSVSTSLSSR). Basic and acidic residues predominate over residues 3107–3120 (RKSSLVEEESKRQY). Positions 3121 to 3141 (DDDDESKSESSEYDDDDDQDY) are enriched in acidic residues.

Belongs to the small GTPase superfamily. CpRas family.

In Dictyostelium discoideum (Social amoeba), this protein is Circularly permutated Ras protein 2 (cpras2).